Reading from the N-terminus, the 608-residue chain is Myosin light chain kinase 2, skeletal/cardiac muscle (608 aa).

The segment at 1–160 is disordered; sequence MATENGAVEL…RGSPAFLHSP (160 aa). Alanine 2 bears the N-acetylalanine mark. 2 stretches are compositionally biased toward basic and acidic residues: residues 31–43 and 50–63; these read AAEKDPAPPDPEK and TKQDPDPSTPKKDA. Over residues 82-91 the composition is skewed to gly residues; that stretch reads GSQGPAGEGG. Residues 116–127 show a composition bias toward basic and acidic residues; the sequence is ASEKKPEAEKGP. A phosphoserine mark is found at serine 153, serine 159, and serine 161. Residues 214–235 are disordered; it reads QKEAGEKAPGQADQAKVQGDTS. The region spanning 297–552 is the Protein kinase domain; sequence MNSKEALGGG…AAQCLAHPWL (256 aa). ATP contacts are provided by residues 303 to 311 and lysine 326; that span reads LGGGKFGAV. Aspartate 418 functions as the Proton acceptor in the catalytic mechanism. At threonine 457 the chain carries Phosphothreonine. The segment at 586-598 is calmodulin-binding; that stretch reads IAVSAANRFKKIS.

This sequence belongs to the protein kinase superfamily. CAMK Ser/Thr protein kinase family. In terms of assembly, may interact with centrin.

It is found in the cytoplasm. It carries out the reaction L-seryl-[myosin light chain] + ATP = O-phospho-L-seryl-[myosin light chain] + ADP + H(+). It catalyses the reaction L-threonyl-[myosin light chain] + ATP = O-phospho-L-threonyl-[myosin light chain] + ADP + H(+). Functionally, implicated in the level of global muscle contraction and cardiac function. Phosphorylates a specific serine in the N-terminus of a myosin light chain. In Oryctolagus cuniculus (Rabbit), this protein is Myosin light chain kinase 2, skeletal/cardiac muscle (MYLK2).